The sequence spans 578 residues: Avenacosidase 2 (578 aa).

The transit peptide at 1 to 57 (MALLCSALSNSTHPSFRSHIAGANSENLWHLSAHPAQKSKRRCNLTLSSRAAARISS) directs the protein to the chloroplast. Residues Gln-89, His-193, and 238–239 (NE) contribute to the a beta-D-glucoside site. Glu-239 (proton donor) is an active-site residue. A disulfide bridge links Cys-258 with Cys-264. A beta-D-glucoside contacts are provided by residues Tyr-381, Glu-454, Trp-504, 511–512 (EW), and Phe-520. The active-site Nucleophile is the Glu-454.

It belongs to the glycosyl hydrolase 1 family. As to quaternary structure, heteromultimer with P60A in a 1:1 stoichiometry. Aggregates to form the fibrillar stromacentre.

Its subcellular location is the plastid. It localises to the chloroplast stroma. It catalyses the reaction avenacoside B + H2O = 26-desgluco-avenacoside B + D-glucose. In terms of biological role, beta-glucosidase acting as a preformed defense system. Hydrolyzes the bisdesmosides avenacosides A and B to 26-desgluco-avenacosides exhibiting fungicidal activity. Can use beta-fucoside &gt; beta-glucoside &gt; beta-galactoside &gt; beta-xyloside as substrates, but not alpha-glycosides, beta-thioglucosides and disaccharides. This chain is Avenacosidase 2 (P60B), found in Avena sativa (Oat).